We begin with the raw amino-acid sequence, 1530 residues long: Neurexin-1 (1530 aa).

The signal sequence occupies residues 1–30; it reads MGTALLQRGGCFLLCLSLLLLGCWAELGSG. In terms of domain architecture, Laminin G-like 1 spans 31-212; the sequence is LEFPGAEGQW…KLDDEPPNSG (182 aa). The Extracellular portion of the chain corresponds to 31-1454; that stretch reads LEFPGAEGQW…EVIRESSSTT (1424 aa). 2 N-linked (GlcNAc...) asparagine glycosylation sites follow: Asn-125 and Asn-190. Positions 199–221 are disordered; sequence SGEVKLDDEPPNSGGGSPCEAGE. One can recognise an EGF-like 1 domain in the interval 213-256; it reads GGSPCEAGEEGEGGVCLNGGVCSVVDDQAVCDCSRTGFRGKDCS. 2 cysteine pairs are disulfide-bonded: Cys-228–Cys-243 and Cys-245–Cys-255. 2 consecutive Laminin G-like domains span residues 299–496 and 503–695; these read IATF…AFKC and DPIT…KPSC. Asp-345, Leu-362, and Met-430 together coordinate Ca(2+). 5 disulfides stabilise this stretch: Cys-460–Cys-496, Cys-666–Cys-695, Cys-703–Cys-714, Cys-708–Cys-723, and Cys-725–Cys-735. Residues 699-736 form the EGF-like 2 domain; that stretch reads TAKPCLSNPCKNNGMCRDGWNRYVCDCSGTGYLGRSCE. A glycan (O-linked (Glc...) serine) is linked at Ser-705. Laminin G-like domains follow at residues 741–914 and 928–1103; these read VLSY…IDYC and DPVT…ERGC. Ca(2+) is bound by residues Asp-788 and Leu-805. An N-linked (GlcNAc...) asparagine glycan is attached at Asn-813. Residue Arg-864 coordinates Ca(2+). Intrachain disulfides connect Cys-906–Cys-914, Cys-1075–Cys-1103, Cys-1110–Cys-1121, Cys-1115–Cys-1130, and Cys-1132–Cys-1142. In terms of domain architecture, EGF-like 3 spans 1106 to 1143; sequence PSTTCQEDSCSNQGVCLQQWDGISCDCSMTSFSGPLCN. Residues 1149-1347 form the Laminin G-like 6 domain; the sequence is YIFSKGGGQI…DANIAIVGNV (199 aa). Ca(2+) contacts are provided by Asp-1199 and Val-1216. The N-linked (GlcNAc...) asparagine glycan is linked to Asn-1246. Ca(2+) contacts are provided by Ile-1298 and Asn-1300. Ser-1408 carries an O-linked (Xyl...) (heparan sulfate) serine glycan. The segment at 1411–1443 is disordered; it reads CPSDDEDIDPCEPSSGGLANPTRAGGREPYPGS. A helical transmembrane segment spans residues 1455–1475; the sequence is GMVVGIVAAAALCILILLYAM. Residues 1476–1530 lie on the Cytoplasmic side of the membrane; it reads YKYRNRDEGSYHVDESRNYISNSAQSNGAVVKEKQPSSAKSANKNKKNKDKEYYV. Positions 1497 to 1523 are interaction with CASK; the sequence is NSAQSNGAVVKEKQPSSAKSANKNKKN. The tract at residues 1497 to 1530 is disordered; the sequence is NSAQSNGAVVKEKQPSSAKSANKNKKNKDKEYYV.

It belongs to the neurexin family. In terms of assembly, interacts (via laminin G-like domain 2 and/or laminin G-like domain 6) with NLGN1 forming a heterotetramer, where one NLGN1 dimer interacts with one NRXN1 dimer. Also interacts (via laminin G-like domain 2 and/or laminin G-like domain 6) with NLGN2, NLGN3 and NLGN4L; interactions with NLGN1, NLGN2, NLGN3 and NLGN4L are calcium-dependent. Interacts (via cytoplasmic C-terminal region) with CASK (via the PDZ, SH3 and guanylate kinase-like domains). Interacts (via cytoplasmic C-terminus) with CASKIN1 and APBA1. Interacts (via laminin G-like domain 2) with NXPH1 and NXPH3. Alpha-type isoforms (neurexin-1-alpha) interact (via laminin G-like domain 2 and/or laminin G-like domain 6) with DAG1 (via alpha-dystroglycan chain). Interacts with LRRTM1, LRRTM2, LRRTM3 and LRRTM4. Interacts with SYT13 and SYTL1. Interacts with CBLN1, CBLN2 and, less avidly, with CBLN4. Interacts with CLSTN3. Alpha-type isoforms interact with alpha-latrotoxin from spider venom. O-glycosylated; contains heparan sulfate. Heparan sulfate attachment is required for synapse development by mediating interactions with neuroligins and LRRTM2.

Its subcellular location is the presynaptic cell membrane. Cell surface protein involved in cell-cell-interactions, exocytosis of secretory granules and regulation of signal transmission. Function is isoform-specific. Alpha-type isoforms have a long N-terminus with six laminin G-like domains and play an important role in synaptic signal transmission. Alpha-type isoforms play a role in the regulation of calcium channel activity and Ca(2+)-triggered neurotransmitter release at synapses and at neuromuscular junctions. They play an important role in Ca(2+)-triggered exocytosis of secretory granules in pituitary gland. They may affect their functions at synapses and in endocrine cells via their interactions with proteins from the exocytotic machinery. Likewise, alpha-type isoforms play a role in regulating the activity of postsynaptic NMDA receptors, a subtype of glutamate-gated ion channels. Both alpha-type and beta-type isoforms may play a role in the formation or maintenance of synaptic junctions via their interactions (via the extracellular domains) with neuroligin family members, CBLN1 or CBLN2. In vitro, triggers the de novo formation of presynaptic structures. May be involved in specification of excitatory synapses. Alpha-type isoforms were first identified as receptors for alpha-latrotoxin from spider venom. In Bos taurus (Bovine), this protein is Neurexin-1 (NRXN1).